The sequence spans 140 residues: Nucleoside diphosphate kinase (140 aa).

ATP contacts are provided by Lys11, Phe59, Arg87, Thr93, Arg104, and Asn114. His117 (pros-phosphohistidine intermediate) is an active-site residue.

This sequence belongs to the NDK family. Homotetramer. Requires Mg(2+) as cofactor.

It is found in the cytoplasm. It carries out the reaction a 2'-deoxyribonucleoside 5'-diphosphate + ATP = a 2'-deoxyribonucleoside 5'-triphosphate + ADP. The catalysed reaction is a ribonucleoside 5'-diphosphate + ATP = a ribonucleoside 5'-triphosphate + ADP. In terms of biological role, major role in the synthesis of nucleoside triphosphates other than ATP. The ATP gamma phosphate is transferred to the NDP beta phosphate via a ping-pong mechanism, using a phosphorylated active-site intermediate. The polypeptide is Nucleoside diphosphate kinase (Novosphingobium aromaticivorans (strain ATCC 700278 / DSM 12444 / CCUG 56034 / CIP 105152 / NBRC 16084 / F199)).